We begin with the raw amino-acid sequence, 192 residues long: dTTP/UTP pyrophosphatase (192 aa).

The active-site Proton acceptor is the D71.

The protein belongs to the Maf family. YhdE subfamily. Requires a divalent metal cation as cofactor.

Its subcellular location is the cytoplasm. It carries out the reaction dTTP + H2O = dTMP + diphosphate + H(+). The enzyme catalyses UTP + H2O = UMP + diphosphate + H(+). Functionally, nucleoside triphosphate pyrophosphatase that hydrolyzes dTTP and UTP. May have a dual role in cell division arrest and in preventing the incorporation of modified nucleotides into cellular nucleic acids. In Pseudoalteromonas atlantica (strain T6c / ATCC BAA-1087), this protein is dTTP/UTP pyrophosphatase.